A 379-amino-acid chain; its full sequence is Gonadotropin-releasing hormone II receptor (379 aa).

At Met-1–Arg-45 the chain is on the extracellular side. Residues Asn-4, Asn-18, and Asn-23 are each glycosylated (N-linked (GlcNAc...) asparagine). The helical transmembrane segment at Val-46 to Leu-65 threads the bilayer. Residues Ser-66–Arg-80 are Cytoplasmic-facing. Residues Pro-81–Leu-100 form a helical membrane-spanning segment. At Asp-101–Lys-118 the chain is on the extracellular side. The N-linked (GlcNAc...) asparagine glycan is linked to Asn-105. A disulfide bond links Cys-117 and Cys-194. A helical membrane pass occupies residues Leu-119 to Leu-140. Topologically, residues Asp-141–Trp-167 are cytoplasmic. The helical transmembrane segment at Ile-168 to Ile-184 threads the bilayer. Over Lys-185–Asn-210 the chain is Extracellular. Residues Met-211–Thr-230 form a helical membrane-spanning segment. Over Arg-231–Thr-283 the chain is Cytoplasmic. The helical transmembrane segment at Pro-284–Ile-302 threads the bilayer. The Extracellular portion of the chain corresponds to Pro-303–His-308. The helical transmembrane segment at Val-309–Phe-328 threads the bilayer. Topologically, residues Thr-329 to Gln-379 are cytoplasmic. Residues Phe-355–Gln-379 form a disordered region.

The protein belongs to the G-protein coupled receptor 1 family. Post-translationally, phosphorylated on the C-terminal cytoplasmic tail.

It is found in the cell membrane. Its function is as follows. Receptor for gonadotropin releasing hormone II (GnRH II). This receptor mediates its action by association with G proteins that activate a phosphatidylinositol-calcium second messenger system. In Clarias gariepinus (North African catfish), this protein is Gonadotropin-releasing hormone II receptor.